The primary structure comprises 622 residues: Threonine--tRNA ligase (622 aa).

The interval 1 to 141 is editing domain; that stretch reads MKTLLIHSDY…SRKITTERKE (141 aa). The interval 199–498 is catalytic; it reads PHVKYIKEKE…TLENRPPALP (300 aa). Residues cysteine 291, histidine 343, and histidine 467 each contribute to the Zn(2+) site.

The protein belongs to the class-II aminoacyl-tRNA synthetase family. As to quaternary structure, homodimer. Zn(2+) serves as cofactor.

It localises to the cytoplasm. It carries out the reaction tRNA(Thr) + L-threonine + ATP = L-threonyl-tRNA(Thr) + AMP + diphosphate + H(+). In terms of biological role, catalyzes the attachment of threonine to tRNA(Thr) in a two-step reaction: L-threonine is first activated by ATP to form Thr-AMP and then transferred to the acceptor end of tRNA(Thr). Also edits incorrectly charged L-seryl-tRNA(Thr). This is Threonine--tRNA ligase from Methanococcus maripaludis (strain C6 / ATCC BAA-1332).